The primary structure comprises 80 residues: Large ribosomal subunit protein bL31B (80 aa).

This sequence belongs to the bacterial ribosomal protein bL31 family. Type B subfamily. As to quaternary structure, part of the 50S ribosomal subunit.

In Streptococcus pneumoniae serotype 2 (strain D39 / NCTC 7466), this protein is Large ribosomal subunit protein bL31B.